We begin with the raw amino-acid sequence, 102 residues long: ATP-dependent Clp protease adapter protein ClpS (102 aa).

The protein belongs to the ClpS family. Binds to the N-terminal domain of the chaperone ClpA.

Its function is as follows. Involved in the modulation of the specificity of the ClpAP-mediated ATP-dependent protein degradation. The sequence is that of ATP-dependent Clp protease adapter protein ClpS from Herminiimonas arsenicoxydans.